Consider the following 160-residue polypeptide: Small ribosomal subunit protein uS7 (160 aa).

Belongs to the universal ribosomal protein uS7 family. As to quaternary structure, part of the 30S ribosomal subunit. Contacts proteins S9 and S11.

Functionally, one of the primary rRNA binding proteins, it binds directly to 16S rRNA where it nucleates assembly of the head domain of the 30S subunit. Is located at the subunit interface close to the decoding center, probably blocks exit of the E-site tRNA. This chain is Small ribosomal subunit protein uS7, found in Rickettsia akari (strain Hartford).